The following is a 224-amino-acid chain: Putative adhesin RF_1314 (224 aa).

The first 22 residues, 1–22 (MKKLLLIAATSATILSSSISFA), serve as a signal peptide directing secretion.

The protein is Putative adhesin RF_1314 of Rickettsia felis (strain ATCC VR-1525 / URRWXCal2) (Rickettsia azadi).